The primary structure comprises 139 residues: Mitochondrial intermembrane space import and assembly protein 40 (139 aa).

3 disulfides stabilise this stretch: Cys53–Cys55, Cys64–Cys97, and Cys74–Cys87. Positions Ser61 to Tyr105 constitute a CHCH domain. Short sequence motifs (cx9C motif) lie at residues Cys64 to Cys74 and Cys87 to Cys97. The interval Leu104–Ser139 is disordered. Residues Pro106–Thr124 are compositionally biased toward acidic residues.

As to quaternary structure, monomer. Can form homooligomers. Interacts with GFER and forms transient disulfide bonds with GFER. Interacts with MICU1. Interacts with COX19 forming transient intermolecular disulfide bridges. Interacts with COA7 through transient intermolecular disulfide bonds. Interacts with AIFM1; the interaction increases in presence of NADH. Interacts with NDUFB10. In terms of processing, forms intrachain disulfide bridges, but exists in different redox states.

The protein resides in the mitochondrion intermembrane space. Its function is as follows. Central component of a redox-sensitive mitochondrial intermembrane space import machinery which is required for the biogenesis of respiratory chain complexes. Functions as a chaperone and catalyzes the formation of disulfide bonds in substrate proteins, such as COX17, COX19, MICU1 and COA7. Required for the import and folding of small cysteine-containing proteins (small Tim) in the mitochondrial intermembrane space (IMS). Required for the import of COA7 in the IMS. Precursor proteins to be imported into the IMS are translocated in their reduced form into the mitochondria. The oxidized form of CHCHD4/MIA40 forms a transient intermolecular disulfide bridge with the reduced precursor protein, resulting in oxidation of the precursor protein that now contains an intramolecular disulfide bond and is able to undergo folding in the IMS. Reduced CHCHD4/MIA40 is then reoxidized by GFER/ERV1 via a disulfide relay system. Mediates formation of disulfide bond in MICU1 in the IMS, promoting formation of the MICU1-MICU2 heterodimer that regulates mitochondrial calcium uptake. This chain is Mitochondrial intermembrane space import and assembly protein 40 (Chchd4), found in Rattus norvegicus (Rat).